Consider the following 295-residue polypeptide: MKVIIPVAGLGTRMLPATKAIPKEMLTIADKPLIQYIVNECVAAGIKEIVFVTHSSKNAIENHFDTSFELETMLEKRVKRQLLDEVRSIVPNDVTLMHVRQGQAKGLGHAVLCGKAVVGKEPFAVVLPDVILADFTANPKTENLAAMIKRFSETQCSQIMVAPVPQEDVSNYGIVDCATDNIRAGETAKIAKMVEKPSIENAPSNLAIVGRYVFSATIWDLLERTPVGVGDEIQLTDAIDMLIEKETVEAFHMTGRAFDCGDKLGYMEAFVEYSLRHEKCGQQFQKIIKELAKSL.

This sequence belongs to the UDPGP type 2 family.

The enzyme catalyses alpha-D-glucose 1-phosphate + UTP + H(+) = UDP-alpha-D-glucose + diphosphate. In terms of biological role, may play a role in stationary phase survival. The sequence is that of UTP--glucose-1-phosphate uridylyltransferase (galU) from Haemophilus ducreyi (strain 35000HP / ATCC 700724).